An 847-amino-acid chain; its full sequence is Vacuolar membrane protease (847 aa).

Topologically, residues 1 to 17 (MQFGKSLLKHVYTRTFK) are cytoplasmic. Residues 18 to 38 (SSLTCSIFAFTLLMIFFVLDW) traverse the membrane as a helical segment. Residues 39-348 (KRMNVYPRLD…GSYWQINLNL (310 aa)) are Vacuolar-facing. Positions 146 and 158 each coordinate Zn(2+). Glutamate 190 acts as the Proton acceptor in catalysis. Glutamate 191 serves as a coordination point for Zn(2+). Asparagine 208 carries N-linked (GlcNAc...) asparagine glycosylation. Residue glutamate 216 coordinates Zn(2+). Residue asparagine 274 is glycosylated (N-linked (GlcNAc...) asparagine). Histidine 291 contributes to the Zn(2+) binding site. Residues 349–369 (HLFLNVVFLIACPAILFMCLF) form a helical membrane-spanning segment. The Cytoplasmic portion of the chain corresponds to 370–381 (RFPSLYAQLKKP). A helical membrane pass occupies residues 382 to 402 (CYLICFTLSSLFVLIFDYVVV). At 403-415 (QSLTKLNPYVIHS) the chain is on the vacuolar side. Residues 416-436 (SPDAVLAFFFLTNLLGLVYSF) form a helical membrane-spanning segment. Residues 437–454 (RYVATHSRMSNEELSCIE) are Cytoplasmic-facing. A helical transmembrane segment spans residues 455–475 (IVLIWYVSMFWYISLLIATLT). Residues 476 to 482 (SIVRGLG) lie on the Vacuolar side of the membrane. The helical transmembrane segment at 483–503 (SLYFVNFGFFCSFFCCILTLI) threads the bilayer. Residues 504–560 (RVRYFVDRMVTINRPANPEQMPLVQSTSGNAYGTSRYPQHRLKAVVSKSASVKLNDN) are Cytoplasmic-facing. A helical membrane pass occupies residues 561–581 (LWSVLFFSCLVPLPLFTCYNL). Over 582-605 (LSEVFIPAVHQSLIDGPYSNTCYK) the chain is Vacuolar. Residues 606 to 626 (FAVILVFMAIINSSPFVFRAL) form a helical membrane-spanning segment. At 627-630 (SKKS) the chain is on the cytoplasmic side. The chain crosses the membrane as a helical span at residues 631-651 (SAILLMLWVSLLFNILRAEPF). The Vacuolar segment spans residues 652–847 (NEKAPIKFRV…LLKMSKTHVM (196 aa)). 4 N-linked (GlcNAc...) asparagine glycosylation sites follow: asparagine 726, asparagine 734, asparagine 800, and asparagine 834.

This sequence belongs to the peptidase M28 family. The cofactor is Zn(2+).

It is found in the vacuole membrane. May be involved in vacuolar sorting and osmoregulation. The chain is Vacuolar membrane protease from Schizosaccharomyces japonicus (strain yFS275 / FY16936) (Fission yeast).